Reading from the N-terminus, the 74-residue chain is Serine protease inhibitor Kazal-type 7 (74 aa).

The signal sequence occupies residues methionine 1 to cysteine 17. Residues asparagine 18–cysteine 74 form the Kazal-like domain. 3 disulfide bridges follow: cysteine 21–cysteine 56, cysteine 34–cysteine 53, and cysteine 42–cysteine 74.

It is found in the secreted. Its function is as follows. Probable serine protease inhibitor. The polypeptide is Serine protease inhibitor Kazal-type 7 (Spink7) (Rattus norvegicus (Rat)).